A 235-amino-acid chain; its full sequence is RNA polymerase sigma-E factor (235 aa).

A Polymerase core binding motif is present at residues 82-95 (DLISVGTIGLIKAV). A DNA-binding region (H-T-H motif) is located at residues 202–221 (QKEVADMLGISQSYISRLEK).

The protein belongs to the sigma-70 factor family.

Functionally, sigma factors are initiation factors that promote the attachment of RNA polymerase to specific initiation sites and are then released. This sigma factor is responsible for the expression of sporulation specific genes. The polypeptide is RNA polymerase sigma-E factor (sigE) (Clostridium acetobutylicum (strain ATCC 824 / DSM 792 / JCM 1419 / IAM 19013 / LMG 5710 / NBRC 13948 / NRRL B-527 / VKM B-1787 / 2291 / W)).